The following is a 494-amino-acid chain: Glycerol kinase (494 aa).

Residue threonine 13 coordinates ADP. Positions 13, 14, and 15 each coordinate ATP. Residue threonine 13 coordinates sn-glycerol 3-phosphate. Arginine 17 serves as a coordination point for ADP. Arginine 83, glutamate 84, tyrosine 135, and aspartate 244 together coordinate sn-glycerol 3-phosphate. Residues arginine 83, glutamate 84, tyrosine 135, aspartate 244, and glutamine 245 each coordinate glycerol. Residues threonine 266 and glycine 309 each coordinate ADP. ATP contacts are provided by threonine 266, glycine 309, glutamine 313, and glycine 410. ADP-binding residues include glycine 410 and asparagine 414.

This sequence belongs to the FGGY kinase family.

It carries out the reaction glycerol + ATP = sn-glycerol 3-phosphate + ADP + H(+). Its pathway is polyol metabolism; glycerol degradation via glycerol kinase pathway; sn-glycerol 3-phosphate from glycerol: step 1/1. With respect to regulation, inhibited by fructose 1,6-bisphosphate (FBP). Functionally, key enzyme in the regulation of glycerol uptake and metabolism. Catalyzes the phosphorylation of glycerol to yield sn-glycerol 3-phosphate. The polypeptide is Glycerol kinase (Shewanella baltica (strain OS185)).